A 510-amino-acid polypeptide reads, in one-letter code: NAD(P)H-quinone oxidoreductase subunit 2, chloroplastic (510 aa).

The next 13 membrane-spanning stretches (helical) occupy residues 26–46 (LFDG…ILLL), 57–77 (IPWL…ALLF), 99–119 (IFQV…VEYI), 124–144 (MAIT…MFLC), 149–169 (LITI…LSGY), 184–204 (LLMG…LYGL), 227–247 (PGIS…LSPA), 295–315 (WHLL…LIAI), 323–343 (MLAY…IVGD), 354–374 (YMLF…LFGL), 395–415 (ALSL…AGFF), 418–438 (LYLF…IALV), and 484–504 (MIVC…IIAI).

It belongs to the complex I subunit 2 family. NDH is composed of at least 16 different subunits, 5 of which are encoded in the nucleus.

The protein localises to the plastid. Its subcellular location is the chloroplast thylakoid membrane. The enzyme catalyses a plastoquinone + NADH + (n+1) H(+)(in) = a plastoquinol + NAD(+) + n H(+)(out). The catalysed reaction is a plastoquinone + NADPH + (n+1) H(+)(in) = a plastoquinol + NADP(+) + n H(+)(out). Its function is as follows. NDH shuttles electrons from NAD(P)H:plastoquinone, via FMN and iron-sulfur (Fe-S) centers, to quinones in the photosynthetic chain and possibly in a chloroplast respiratory chain. The immediate electron acceptor for the enzyme in this species is believed to be plastoquinone. Couples the redox reaction to proton translocation, and thus conserves the redox energy in a proton gradient. This chain is NAD(P)H-quinone oxidoreductase subunit 2, chloroplastic, found in Trachelium caeruleum (Blue throatwort).